Consider the following 876-residue polypeptide: ATP-dependent helicase Lhr-Core (876 aa).

Residues Q37, K60, T61, D175, E176, R374, and H377 each contribute to the ATP site. The Helicase ATP-binding domain occupies 41 to 232 (IPLIKKGKNV…FLVGGNGDYE (192 aa)). The DEAH box motif lies at 175–178 (DEIH). Residues 249 to 421 (PVKDLVHATE…NIHVPENPLD (173 aa)) form the Helicase C-terminal domain. Residues 422–506 (VLTQLIVAAS…IFFLNSGTIP (85 aa)) are WH domain. Positions 507-876 (DEAMIPVKME…DLEYTEAGIK (370 aa)) are domain 4.

This sequence belongs to the Lhr helicase family. Lhr-Core subfamily. As to quaternary structure, monomer.

The catalysed reaction is Couples ATP hydrolysis with the unwinding of duplex DNA by translocating in the 3'-5' direction.. The enzyme catalyses ATP + H2O = ADP + phosphate + H(+). Probably part of a 4-gene DNA damage response locus in which the upstream ups system, in combination with this downstream locus, functions in homologous recombination to rescue Sulfolobales from DNA-damaging threats. DNA helicase that translocates in a 3'-5' direction on single-stranded (ss)DNA. Binds Holliday junction (HJ) DNA, Y-shaped DNA, DNA with a 3'-overhang and single-stranded (ss)DNA with high affinity; binds double-stranded (ds)DNA with less affinity. Has helicase activity on DNA with a 3'-overhang, Y-shaped DNA and HJ DNA. Does not unwind blunt-ended dsDNA or DNA with a 5'-overhang. The polypeptide is ATP-dependent helicase Lhr-Core (Sulfolobus acidocaldarius (strain ATCC 33909 / DSM 639 / JCM 8929 / NBRC 15157 / NCIMB 11770)).